A 455-amino-acid chain; its full sequence is UDP-N-acetylmuramoylalanine--D-glutamate ligase (455 aa).

ATP is bound at residue 117–123 (GSAGKTT).

This sequence belongs to the MurCDEF family.

The protein localises to the cytoplasm. It catalyses the reaction UDP-N-acetyl-alpha-D-muramoyl-L-alanine + D-glutamate + ATP = UDP-N-acetyl-alpha-D-muramoyl-L-alanyl-D-glutamate + ADP + phosphate + H(+). It participates in cell wall biogenesis; peptidoglycan biosynthesis. Its function is as follows. Cell wall formation. Catalyzes the addition of glutamate to the nucleotide precursor UDP-N-acetylmuramoyl-L-alanine (UMA). This Symbiobacterium thermophilum (strain DSM 24528 / JCM 14929 / IAM 14863 / T) protein is UDP-N-acetylmuramoylalanine--D-glutamate ligase.